A 271-amino-acid polypeptide reads, in one-letter code: MADYSAGTESQEVVVNVTKNTSETIQRSDSLVSVPFLQKLVAEAVGTYFLIFAGCASLVVNENYYNMITFPGIAIVWGLVLTVLVYTVGHISGGHFNPAVTIAFASTRRFPLIQVPAYVVAQLLGSILASGTLRLLFMGNHDQFSGTVPNGTNLQAFVFEFIMTFFLMFVICGVATDNRAVGEFAGIAIGSTLLLNVIIGGPVTGASMNPARSLGPAFVHGEYEGIWIYLLAPVVGAIAGAWVYNIVRYTDKPLSETTKSASFLKGRAASK.

Transmembrane regions (helical) follow at residues 40–62 and 72–94; these read LVAE…VVNE and GIAI…ISGG. Residues 97–99 carry the NPA 1 motif; the sequence is NPA. Helical transmembrane passes span 115–137, 152–174, and 181–203; these read VPAY…RLLF, TNLQ…ICGV, and VGEF…GGPV. An NPA 2 motif is present at residues 209–211; it reads NPA. The chain crosses the membrane as a helical span at residues 225-247; sequence GIWIYLLAPVVGAIAGAWVYNIV. Ser-262 carries the phosphoserine; by CPK modification.

This sequence belongs to the MIP/aquaporin (TC 1.A.8) family. NIP (TC 1.A.8.12) subfamily.

The protein localises to the symbiosome. Its subcellular location is the peribacteroid membrane. In terms of biological role, aquaporins facilitate the transport of water and small neutral solutes across cell membranes. This aquaporin may function in transporting small molecules across the peribacteroid membranes. The protein is Nodulin-26 of Glycine max (Soybean).